The primary structure comprises 533 residues: Ribonuclease Y (533 aa).

The interval 16-41 (VERIRRRAEQDAAEQTERVRREAEQI) is disordered. The segment covering 22-41 (RAEQDAAEQTERVRREAEQI) has biased composition (basic and acidic residues). The KH domain maps to 223 to 289 (VVSVLHLPSD…RITLTALVSD (67 aa)). In terms of domain architecture, HD spans 349-442 (VLAHLVESAH…TQAADQISGG (94 aa)).

It belongs to the RNase Y family.

Its function is as follows. Endoribonuclease that initiates mRNA decay. The polypeptide is Ribonuclease Y (Parafrankia sp. (strain EAN1pec)).